A 481-amino-acid chain; its full sequence is Mechanosensory protein 2 (481 aa).

Positions 1-22 are enriched in low complexity; that stretch reads MSATMSSARNSVVSLSSNGSVK. Disordered regions lie at residues 1–67 and 80–104; these read MSAT…MATR and SANS…GNGK. Positions 27–38 are enriched in polar residues; sequence LVSNERSSSIQQ. Residues 86–104 are compositionally biased toward basic and acidic residues; the sequence is DSVKKEKQAEKDVEKGNGK. A helical membrane pass occupies residues 115–135; sequence GVCGWILTILSYLLIFFTLPI. The span at 403–421 shows a compositional bias: gly residues; the sequence is EGGGGHGHSHGGGGGGLGS. Residues 403-481 form a disordered region; the sequence is EGGGGHGHSH…SQLDPALLIR (79 aa). Positions 433-447 are enriched in low complexity; it reads SGPSTTTTSGRPLLR. The segment covering 463–473 has biased composition (polar residues); the sequence is APNQSQTSVSQ.

This sequence belongs to the band 7/mec-2 family. In terms of assembly, component of a non-voltage-gated amiloride-sensitive cation channel complex (also called the degenerin channel complex) composed of at least the mec-2, mec-4, mec-6 and mec-10 subunits; the complex mediates mechanotransduction in touch cells. Interacts with mec-6 and mec-4.

The protein localises to the membrane. Subunit of an amiloride-sensitive cation channel (degenerin channel complex) permeable for sodium, potassium, lithium and N-methylglucamine, and required for mechanosensory transduction (touch sensitivity). Positively regulates the activity of the putative mechanosensory transduction channel. May link the mechanosensory channel and the microtubule cytoskeleton of the touch receptor neurons. Required for the function of a set of six touch receptor neurons. In Caenorhabditis elegans, this protein is Mechanosensory protein 2.